The following is a 301-amino-acid chain: Ribonuclease H2 subunit A (301 aa).

Methionine 1 is modified (N-acetylmethionine). Positions 28 to 251 constitute an RNase H type-2 domain; it reads PCVLGVDEAG…AQAILEKEAE (224 aa). A divalent metal cation contacts are provided by aspartate 34, glutamate 35, and aspartate 142. Position 217 is a phosphothreonine (threonine 217). Serine 258 is subject to Phosphoserine.

It belongs to the RNase HII family. Eukaryotic subfamily. As to quaternary structure, the RNase H2 complex is a heterotrimer composed of the catalytic subunit RNASEH2A and the non-catalytic subunits RNASEH2B and RNASEH2C. It depends on Mn(2+) as a cofactor. Mg(2+) serves as cofactor.

It localises to the nucleus. It carries out the reaction Endonucleolytic cleavage to 5'-phosphomonoester.. Functionally, catalytic subunit of RNase HII, an endonuclease that specifically degrades the RNA of RNA:DNA hybrids. Participates in DNA replication, possibly by mediating the removal of lagging-strand Okazaki fragment RNA primers during DNA replication. Mediates the excision of single ribonucleotides from DNA:RNA duplexes. The polypeptide is Ribonuclease H2 subunit A (Rnaseh2a) (Rattus norvegicus (Rat)).